The following is a 1012-amino-acid chain: Vacuolar membrane protease (1012 aa).

Topologically, residues 1–60 (MRRSTDPRNLLVRRGPLLVDGESAISELDPGFFPTGDAPKMSSTTRRRFNLIAFTPGPVT) are cytoplasmic. The chain crosses the membrane as a helical span at residues 61 to 81 (VISSLVYLALLIPLLLVHTIV). Residues 82-432 (PSAPKSNPKG…SFAVFRLHTL (351 aa)) are Vacuolar-facing. N-linked (GlcNAc...) asparagine glycosylation occurs at Asn159. The Zn(2+) site is built by His215 and Asp227. Glu261 functions as the Proton acceptor in the catalytic mechanism. Zn(2+)-binding residues include Glu262, Glu287, and His360. Residues 433–453 (FAISVTLLVVCPIVLFVIGII) form a helical membrane-spanning segment. Residues 454–487 (LSKMDKMYLFSIHETIPETKEKVSVRGLRGLFRY) are Cytoplasmic-facing. Residues 488 to 508 (PIILVVSSGILIGLSYLLAKV) form a helical membrane-spanning segment. Residues 509–518 (NPFIVHSSSY) lie on the Vacuolar side of the membrane. The helical transmembrane segment at 519-539 (AVWSMMLSSWIFMTWFLSCIA) threads the bilayer. Over 540–550 (DFFRPSALHRA) the chain is Cytoplasmic. A helical transmembrane segment spans residues 551 to 571 (YTFTWQLLVMWVLLVISTVYV). Residues 572–575 (NQHD) are Vacuolar-facing. A helical membrane pass occupies residues 576-596 (IAAGYFIVFYFAGTFLATLIS). Residues 597-710 (YLELFALPNK…WSASLPTWTW (114 aa)) are Cytoplasmic-facing. Over residues 614-629 (SQYPSRLGSNRSSRIL) the composition is skewed to polar residues. Residues 614–660 (SQYPSRLGSNRSSRILSPSADELPTGGDNNGEIYDGEEEPTESSSLL) are disordered. Residues 711–731 (VLQFLFVGPVVIMFIGQLGLF) form a helical membrane-spanning segment. Over 732 to 743 (LTSAMNQVGADG) the chain is Vacuolar. The chain crosses the membrane as a helical span at residues 744 to 764 (VGLLVVYIAIAVFSVLLLIPL). Residues 765-777 (SPFIHRFTYHVPT) are Cytoplasmic-facing. The helical transmembrane segment at 778-798 (FLLLVFIATLIYNLAAFPFSA) threads the bilayer. Topologically, residues 799-1012 (ENRLKIFFVQ…DGLVEVSRGF (214 aa)) are vacuolar. N-linked (GlcNAc...) asparagine glycans are attached at residues Asn842 and Asn878.

This sequence belongs to the peptidase M28 family. The cofactor is Zn(2+).

Its subcellular location is the vacuole membrane. Its function is as follows. May be involved in vacuolar sorting and osmoregulation. The polypeptide is Vacuolar membrane protease (Coccidioides posadasii (strain C735) (Valley fever fungus)).